The sequence spans 32 residues: MSDIN-like toxin proprotein 3 (32 aa).

Residues 1–10 (MSDINATRLP) constitute a propeptide that is removed on maturation. Positions 11–17 (VWIGYSP) form a cross-link, cyclopeptide (Val-Pro). The propeptide occupies 18–32 (CVGDDAVALLNRGEG).

This sequence belongs to the MSDIN fungal toxin family. Processed by the macrocyclase-peptidase enzyme POPB to yield a toxic cyclic heptapeptide. POPB first removes 10 residues from the N-terminus. Conformational trapping of the remaining peptide forces the enzyme to release this intermediate rather than proceed to macrocyclization. The enzyme rebinds the remaining peptide in a different conformation and catalyzes macrocyclization of the N-terminal 7 residues.

Functionally, probable toxin that belongs to the MSDIN-like toxin family responsible for a large number of food poisoning cases and deaths. In Amanita fuligineoides, this protein is MSDIN-like toxin proprotein 3.